Consider the following 311-residue polypeptide: Mediator of RNA polymerase II transcription subunit 27 (311 aa).

Ser-132 bears the Phosphoserine mark. Lys-134 is modified (N6-methyllysine).

This sequence belongs to the Mediator complex subunit 27 family. In terms of assembly, component of the Mediator complex, which is composed of MED1, MED4, MED6, MED7, MED8, MED9, MED10, MED11, MED12, MED13, MED13L, MED14, MED15, MED16, MED17, MED18, MED19, MED20, MED21, MED22, MED23, MED24, MED25, MED26, MED27, MED29, MED30, MED31, CCNC, CDK8 and CDC2L6/CDK11. The MED12, MED13, CCNC and CDK8 subunits form a distinct module termed the CDK8 module. Mediator containing the CDK8 module is less active than Mediator lacking this module in supporting transcriptional activation. Individual preparations of the Mediator complex lacking one or more distinct subunits have been variously termed ARC, CRSP, DRIP, PC2, SMCC and TRAP.

It localises to the nucleus. In terms of biological role, component of the Mediator complex, a coactivator involved in the regulated transcription of nearly all RNA polymerase II-dependent genes. Mediator functions as a bridge to convey information from gene-specific regulatory proteins to the basal RNA polymerase II transcription machinery. Mediator is recruited to promoters by direct interactions with regulatory proteins and serves as a scaffold for the assembly of a functional preinitiation complex with RNA polymerase II and the general transcription factors. This is Mediator of RNA polymerase II transcription subunit 27 (Med27) from Mus musculus (Mouse).